Reading from the N-terminus, the 1032-residue chain is GPI inositol-deacylase (1032 aa).

Residue Asn-12 is glycosylated (N-linked (GlcNAc...) asparagine). A helical membrane pass occupies residues 15–35 (ILTLVSFFGLVLFYLTWYLYT). Residue Ser-195 is part of the active site. N-linked (GlcNAc...) asparagine glycans are attached at residues Asn-520 and Asn-555. 2 helical membrane passes run 703-723 (LATI…QVKH) and 740-760 (ICSP…TPIM). An N-linked (GlcNAc...) asparagine glycan is attached at Asn-784. 3 helical membrane passes run 805-825 (LWFI…LTFY), 861-880 (WANR…PIYM), and 884-903 (FAYV…ILVA). Asn-907 is a glycosylation site (N-linked (GlcNAc...) asparagine). The helical transmembrane segment at 916–936 (SLLMLMLWVLPINVPILVVFV) threads the bilayer. N-linked (GlcNAc...) asparagine glycosylation is found at Asn-938 and Asn-942. The next 2 membrane-spanning stretches (helical) occupy residues 943 to 963 (WTTP…ILLM) and 985 to 1005 (AFLA…TYWI).

The protein belongs to the GPI inositol-deacylase family.

The protein localises to the endoplasmic reticulum membrane. Functionally, involved in inositol deacylation of GPI-anchored proteins which plays important roles in the quality control and ER-associated degradation of GPI-anchored proteins. The polypeptide is GPI inositol-deacylase (BST1) (Debaryomyces hansenii (strain ATCC 36239 / CBS 767 / BCRC 21394 / JCM 1990 / NBRC 0083 / IGC 2968) (Yeast)).